A 712-amino-acid polypeptide reads, in one-letter code: Protein phosphatase 1 regulatory subunit 37 (712 aa).

Residues 1–12 (MEIPPQEAPPGP) show a composition bias toward pro residues. Residues 1–47 (MEIPPQEAPPGPGADADADAEAETEEASAEAESPTGTSPPADGRLKA) are disordered. The segment covering 16-29 (ADADAEAETEEASA) has biased composition (acidic residues). 2 positions are modified to phosphoserine: Ser-56 and Ser-62. LRR repeat units follow at residues 226–246 (SLAVLHLENASLSGRPLMLLA), 254–275 (NLRELYLADNKLNGLQDSAQLG), 283–303 (SLQILDLRNNHVLDSGLAYIC), 312–332 (GLVTLVLWNNQLTHTGMAFLG), and 340–360 (SLETLNLGHNPIGNEGVRNLK). The segment at 492-680 (ESGELPAVGS…PPGLEAKGGS (189 aa)) is disordered. Over residues 514-531 (SDSDSDSDREEQEEEEED) the composition is skewed to acidic residues. Ser-583 bears the Phosphoserine mark. Positions 605–626 (PPVPPTFVSSPPPSPPSPPASP) are enriched in pro residues. Residues 639–651 (SEAQPQLEPSQAG) show a composition bias toward polar residues.

The protein belongs to the PPP1R37 family. Interacts with PPP1CA.

In terms of biological role, inhibits phosphatase activity of protein phosphatase 1 (PP1) complexes. The polypeptide is Protein phosphatase 1 regulatory subunit 37 (Ppp1r37) (Mus musculus (Mouse)).